Reading from the N-terminus, the 819-residue chain is Ribosome-releasing factor 2, mitochondrial (819 aa).

Residues 1–30 constitute a mitochondrion transit peptide; it reads MWKWNVRRWAGARVNISKNRLSVINVGSRY. The 289-residue stretch at 39–327 folds into the tr-type G domain; sequence SKVRNIGIIA…AIVNYLPSPI (289 aa). Residues 48–55, 113–117, and 165–168 contribute to the GTP site; these read AHIDAGKT, DTPGH, and NKMD.

Belongs to the TRAFAC class translation factor GTPase superfamily. Classic translation factor GTPase family. EF-G/EF-2 subfamily.

The protein localises to the mitochondrion. Its function is as follows. Mitochondrial GTPase that mediates the disassembly of ribosomes from messenger RNA at the termination of mitochondrial protein biosynthesis. Not involved in the GTP-dependent ribosomal translocation step during translation elongation. In Saccharomyces cerevisiae (strain RM11-1a) (Baker's yeast), this protein is Ribosome-releasing factor 2, mitochondrial.